Reading from the N-terminus, the 44-residue chain is Endochitinase 1 (44 aa).

It belongs to the glycosyl hydrolase 19 family. Chitinase class I subfamily.

It carries out the reaction Random endo-hydrolysis of N-acetyl-beta-D-glucosaminide (1-&gt;4)-beta-linkages in chitin and chitodextrins.. Functionally, defense against chitin-containing fungal pathogens. This is Endochitinase 1 from Capsicum chinense (Scotch bonnet).